Consider the following 459-residue polypeptide: Vanillin aminotransferase (459 aa).

Residues 115-116 (GS) and aspartate 255 contribute to the pyridoxal 5'-phosphate site. Lysine 284 is modified (N6-(pyridoxal phosphate)lysine). Residue 320–321 (FT) coordinates pyridoxal 5'-phosphate. Positions 428 to 459 (LSLEELDELIRIYGKALKDTEKRVEELKSQKK) form a coiled coil.

This sequence belongs to the class-III pyridoxal-phosphate-dependent aminotransferase family. Expressed in placental tissue of immature fruit.

It carries out the reaction vanillin + L-alanine = vanillylamine + pyruvate. Functionally, involved in the biosynthesis of capsaicinoids natural products, pungent alkaloids synthesized from phenylpropanoid intermediates in the placental tissue of chili pepper fruit acting as repellant on herbivorous mammals and conferring spiciness to hot peppers. Can transfer an amine from alanine to vanillin, forming vanillylamine and pyruvate. This chain is Vanillin aminotransferase, found in Capsicum frutescens (Cayenne pepper).